Consider the following 95-residue polypeptide: Late cornified envelope protein 3B (95 aa).

Positions 1–13 (MSCQQNQQQCQPL) are enriched in low complexity. Disordered stretches follow at residues 1–29 (MSCQ…SAQC) and 68–95 (RQSS…GGCC).

This sequence belongs to the LCE family. As to expression, skin-specific. Expression was readily detected in adult trunk skin, adult arm skin, fetal skin, penal skin, vulva, esophagus and tongue. Not expressed in the cervix, rectum, lung, colon, or placenta.

In terms of biological role, a structural component of the cornified envelope of the stratum corneum involved in innate cutaneous host defense. Possesses defensin-like antimicrobial activity against a broad spectrum of Gram-positive and Gram-negative bacteria, both aerobic and anaerobic species. Upon inflammation, may regulate skin barrier repair by shaping cutaneous microbiota composition and immune response to bacterial antigens. This is Late cornified envelope protein 3B from Homo sapiens (Human).